A 289-amino-acid polypeptide reads, in one-letter code: ATP synthase gamma chain (289 aa).

The protein belongs to the ATPase gamma chain family. As to quaternary structure, F-type ATPases have 2 components, CF(1) - the catalytic core - and CF(0) - the membrane proton channel. CF(1) has five subunits: alpha(3), beta(3), gamma(1), delta(1), epsilon(1). CF(0) has three main subunits: a, b and c.

It localises to the cell inner membrane. Functionally, produces ATP from ADP in the presence of a proton gradient across the membrane. The gamma chain is believed to be important in regulating ATPase activity and the flow of protons through the CF(0) complex. The chain is ATP synthase gamma chain from Histophilus somni (strain 2336) (Haemophilus somnus).